Consider the following 129-residue polypeptide: Small ribosomal subunit protein uS11 (129 aa).

It belongs to the universal ribosomal protein uS11 family. As to quaternary structure, part of the 30S ribosomal subunit. Interacts with proteins S7 and S18. Binds to IF-3.

Its function is as follows. Located on the platform of the 30S subunit, it bridges several disparate RNA helices of the 16S rRNA. Forms part of the Shine-Dalgarno cleft in the 70S ribosome. The chain is Small ribosomal subunit protein uS11 from Maricaulis maris (strain MCS10) (Caulobacter maris).